A 117-amino-acid polypeptide reads, in one-letter code: Large ribosomal subunit protein bL20 (117 aa).

Belongs to the bacterial ribosomal protein bL20 family.

Functionally, binds directly to 23S ribosomal RNA and is necessary for the in vitro assembly process of the 50S ribosomal subunit. It is not involved in the protein synthesizing functions of that subunit. The chain is Large ribosomal subunit protein bL20 from Wolinella succinogenes (strain ATCC 29543 / DSM 1740 / CCUG 13145 / JCM 31913 / LMG 7466 / NCTC 11488 / FDC 602W) (Vibrio succinogenes).